The sequence spans 371 residues: Poly(rC)-binding protein 3 (371 aa).

KH domains are found at residues 45 to 95, 129 to 182, and 293 to 357; these read TLTI…TITG, PVTL…TISG, and ASTH…QYLI.

Its subcellular location is the cytoplasm. Single-stranded nucleic acid binding protein that binds preferentially to oligo dC. This is Poly(rC)-binding protein 3 from Homo sapiens (Human).